Here is a 511-residue protein sequence, read N- to C-terminus: MNQDRLRDVFDGAFSRIALARKIVTPRLMLKEIGVIKSIGTGIAKVSGLPGTCFEEVLKFPGGYGIAFNIEEEEIGVILLGDHSHLRAGDEVERRGHVMDVPVGDALIGRIVNPLGRALDGEAPVISSRRMPIERPAPQIMDRAPVTVPLQTGIKVIDALIPVGRGQRELILGDRQTGKSAIALDTILNQKDENVVCIYCAIGQQASSVAKVVAALQENDALSYTVVVVTEGNDPPGLIYVAPYAATAIGEYFMEQGRDVLIVYDDLSHHARAYRELSLLMRRPPGREAYPGDIFYIHSRLLERATHLRPELGGGSLTALPIVETEAEDIAAYIPTNLISITDGQIYLSPTLFQLGILPAIDVGKSVSRVGGKAQRPVYRAATGELRLDYSQFSELETFTRFGGRLDERTRTVIEHGRRIRACLQQPESSPVSVSEQIILLLALTAKLFDEVPLENMGEAERAVRAVVLNIPPELLARMEANESLNDADRHALLWHASTALDGLGSAHAKA.

Residue 173–180 coordinates ATP; sequence GDRQTGKS.

Belongs to the ATPase alpha/beta chains family. F-type ATPases have 2 components, CF(1) - the catalytic core - and CF(0) - the membrane proton channel. CF(1) has five subunits: alpha(3), beta(3), gamma(1), delta(1), epsilon(1). CF(0) has three main subunits: a(1), b(2) and c(9-12). The alpha and beta chains form an alternating ring which encloses part of the gamma chain. CF(1) is attached to CF(0) by a central stalk formed by the gamma and epsilon chains, while a peripheral stalk is formed by the delta and b chains.

It localises to the cell inner membrane. The catalysed reaction is ATP + H2O + 4 H(+)(in) = ADP + phosphate + 5 H(+)(out). Its function is as follows. Produces ATP from ADP in the presence of a proton gradient across the membrane. The alpha chain is a regulatory subunit. The protein is ATP synthase subunit alpha 2 of Nitrosospira multiformis (strain ATCC 25196 / NCIMB 11849 / C 71).